The primary structure comprises 145 residues: Aspartate 1-decarboxylase (145 aa).

Ser-25 functions as the Schiff-base intermediate with substrate; via pyruvic acid in the catalytic mechanism. Ser-25 bears the Pyruvic acid (Ser) mark. Thr-57 is a binding site for substrate. Tyr-58 functions as the Proton donor in the catalytic mechanism. 73–75 contributes to the substrate binding site; the sequence is GAA.

The protein belongs to the PanD family. As to quaternary structure, heterooctamer of four alpha and four beta subunits. It depends on pyruvate as a cofactor. In terms of processing, is synthesized initially as an inactive proenzyme, which is activated by self-cleavage at a specific serine bond to produce a beta-subunit with a hydroxyl group at its C-terminus and an alpha-subunit with a pyruvoyl group at its N-terminus.

The protein localises to the cytoplasm. It carries out the reaction L-aspartate + H(+) = beta-alanine + CO2. It functions in the pathway cofactor biosynthesis; (R)-pantothenate biosynthesis; beta-alanine from L-aspartate: step 1/1. Its function is as follows. Catalyzes the pyruvoyl-dependent decarboxylation of aspartate to produce beta-alanine. This Micrococcus luteus (strain ATCC 4698 / DSM 20030 / JCM 1464 / CCM 169 / CCUG 5858 / IAM 1056 / NBRC 3333 / NCIMB 9278 / NCTC 2665 / VKM Ac-2230) (Micrococcus lysodeikticus) protein is Aspartate 1-decarboxylase.